The primary structure comprises 165 residues: Urease accessory protein UreE (165 aa).

The protein belongs to the UreE family.

It localises to the cytoplasm. Functionally, involved in urease metallocenter assembly. Binds nickel. Probably functions as a nickel donor during metallocenter assembly. This is Urease accessory protein UreE from Flavobacterium johnsoniae (strain ATCC 17061 / DSM 2064 / JCM 8514 / BCRC 14874 / CCUG 350202 / NBRC 14942 / NCIMB 11054 / UW101) (Cytophaga johnsonae).